A 228-amino-acid polypeptide reads, in one-letter code: MALQIGFLLFPQVQQLDLTGPYDVLASLPDVQVHLVWKDLVPVTSSTGLQLKPTTTFEDCPVLDVICVPGGAGVGPLMEDEQTLDFIRSQAAQARYVTSVCTGSLVLGAAGLLQGKRATTHWAYHDLLPTLGAIPVKDRVVRDGNLFTGGGITAGIDFALTLAQELVGVDTAQLVQLQLEYAPAPPFDSGSPDTAPSAVVDEARKRAAPSLKLRTEITERAAAKLNLR.

Cys101 is a catalytic residue.

Homodimer.

The enzyme catalyses N-cyclohexylformamide = cyclohexyl isocyanide + H2O. Sensitive to thiol reagents and oxidizing reagents, but is not influenced by chelators or reducing reagents. In terms of biological role, catalyzes the hydration of cyclohexyl isocyanide to N-cyclohexylformamide. Acts on various isonitriles, but not on nitriles or amides. Probably involved in detoxification. The chain is Isonitrile hydratase (inhA) from Pseudomonas putida (Arthrobacter siderocapsulatus).